Consider the following 349-residue polypeptide: 1-acylglycerol-3-phosphate O-acyltransferase ABHD5 (349 aa).

Ala2 is modified (N-acetylalanine). The 108-residue stretch at 77–184 folds into the AB hydrolase-1 domain; that stretch reads PLVLLHGFGG…LVEPWGFPER (108 aa). At Ser122 the chain carries Phosphoserine. The HXXXXD motif motif lies at 327-332; the sequence is HYVYAD.

Belongs to the peptidase S33 family. ABHD4/ABHD5 subfamily. In terms of assembly, interacts with ADRP, PLIN and PNPLA2. Interacts with PLIN5; promotes interaction with PNPLA2. As to expression, widely expressed in various tissues, including lymphocytes, liver, skeletal muscle and brain. Expressed by upper epidermal layers and dermal fibroblasts in skin, hepatocytes and neurons (at protein level).

The protein resides in the cytoplasm. Its subcellular location is the lipid droplet. The protein localises to the cytosol. The enzyme catalyses a 1-acyl-sn-glycero-3-phosphate + an acyl-CoA = a 1,2-diacyl-sn-glycero-3-phosphate + CoA. It carries out the reaction 1-(9Z-octadecenoyl)-sn-glycero-3-phosphate + hexadecanoyl-CoA = 1-(9Z)-octadecenoyl-2-hexadecanoyl-sn-glycero-3-phosphate + CoA. The catalysed reaction is 1-(9Z-octadecenoyl)-sn-glycero-3-phosphate + octadecanoyl-CoA = 1-(9Z-octadecenoyl)-2-octadecanoyl-sn-glycero-3-phosphate + CoA. It catalyses the reaction 1-(9Z-octadecenoyl)-sn-glycero-3-phosphate + (9Z)-octadecenoyl-CoA = 1,2-di-(9Z-octadecenoyl)-sn-glycero-3-phosphate + CoA. The enzyme catalyses 1-(9Z-octadecenoyl)-sn-glycero-3-phosphate + (5Z,8Z,11Z,14Z)-eicosatetraenoyl-CoA = 1-(9Z)-octadecenoyl-2-(5Z,8Z,11Z,14Z)-eicosatetraenoyl-sn-glycero-3-phosphate + CoA. It carries out the reaction eicosanoyl-CoA + 1-(9Z-octadecenoyl)-sn-glycero-3-phosphate = 1-(9Z)-octadecenoyl-2-eicosanoyl-sn-glycero-3-phosphate + CoA. The catalysed reaction is 1-hexadecanoyl-sn-glycero-3-phosphate + (9Z)-octadecenoyl-CoA = 1-hexadecanoyl-2-(9Z-octadecenoyl)-sn-glycero-3-phosphate + CoA. It catalyses the reaction 1-octadecanoyl-sn-glycero-3-phosphate + (9Z)-octadecenoyl-CoA = 1-octadecanoyl-2-(9Z-octadecenoyl)-sn-glycero-3-phosphate + CoA. The enzyme catalyses 1-(5Z,8Z,11Z,14Z-eicosatetraenoyl)-sn-glycero-3-phosphate + (9Z)-octadecenoyl-CoA = 1-(5Z,8Z,11Z,14Z)-eicosatetraenoyl-2-(9Z)-octadecenoyl-sn-glycero-3-phosphate + CoA. Its activity is regulated as follows. Acyltransferase activity is inhibited by detergents such as Triton X-100 and 3-[(3-cholamidopropyl)dimethylammonio]-1-propanesulfonate (CHAPS). Acyltransferase activity is inhibited by the presence of magnesium and calcium. Coenzyme A-dependent lysophosphatidic acid acyltransferase that catalyzes the transfer of an acyl group on a lysophosphatidic acid. Functions preferentially with 1-oleoyl-lysophosphatidic acid followed by 1-palmitoyl-lysophosphatidic acid, 1-stearoyl-lysophosphatidic acid and 1-arachidonoyl-lysophosphatidic acid as lipid acceptor. Functions preferentially with arachidonoyl-CoA followed by oleoyl-CoA as acyl group donors. Functions in phosphatidic acid biosynthesis. May regulate the cellular storage of triacylglycerol through activation of the phospholipase PNPLA2. Involved in keratinocyte differentiation. Regulates lipid droplet fusion. This is 1-acylglycerol-3-phosphate O-acyltransferase ABHD5 from Homo sapiens (Human).